The chain runs to 296 residues: Cell division protein DivIB (296 aa).

At 1–29 (MTKEIPKINNEYLKEKRKKQRIQQRRVQR) the chain is on the cytoplasmic side. A helical membrane pass occupies residues 30–50 (MIVGILVVIVLLILVYMFTPI). One can recognise a POTRA domain in the interval 51–119 (SHIKSADIKG…NPIEVNVKEH (69 aa)). The Extracellular portion of the chain corresponds to 51–296 (SHIKSADIKG…NKIKDEESSE (246 aa)). Residues 256 to 273 (NNGQTSSASAKEVQSGTA) are compositionally biased toward polar residues. The tract at residues 256-296 (NNGQTSSASAKEVQSGTASEDKAKDDLQKALNKIKDEESSE) is disordered. Over residues 274–296 (SEDKAKDDLQKALNKIKDEESSE) the composition is skewed to basic and acidic residues.

The protein belongs to the FtsQ/DivIB family. DivIB subfamily.

The protein resides in the cell membrane. Its function is as follows. Cell division protein that may be involved in stabilizing or promoting the assembly of the division complex. The chain is Cell division protein DivIB from Staphylococcus pseudintermedius (strain HKU10-03).